A 352-amino-acid polypeptide reads, in one-letter code: Divinyl chlorophyll a/b light-harvesting protein PcbA (352 aa).

6 consecutive transmembrane segments (helical) span residues 27–47, 90–110, 142–162, 203–223, 243–263, and 306–326; these read FIAA…AFTL, VLAI…GGLL, FILG…VEWA, VMGG…WHIA, AVLS…AFWS, and LANV…WHAL.

This sequence belongs to the PsbB/PsbC family. IsiA/Pcb subfamily. The antenna complex consists of divinyl chlorophylls (a and b) and divinyl chlorophyll a/b binding proteins and binds less divinyl chlorophyll b than does low-light-adapted Prochlorococcus. Also forms complexes with PSII, consisting of a PSII dimer and 4 or 8 PcbA subunits. These complexes are also found under conditions of iron-starvation. Divinyl chlorophyll a is required as a cofactor. The cofactor is divinyl chlorophyll b.

It localises to the cellular thylakoid membrane. In terms of biological role, the antenna complex functions as a light receptor, it captures and delivers excitation energy to photosystem II and possibly to photosystem I. The Prochlorales pcb genes are not related to higher plant LHCs. This is Divinyl chlorophyll a/b light-harvesting protein PcbA (pcbA) from Prochlorococcus marinus subsp. pastoris (strain CCMP1986 / NIES-2087 / MED4).